Here is a 135-residue protein sequence, read N- to C-terminus: Agouti-signaling protein (135 aa).

An N-terminal signal peptide occupies residues 1 to 22 (MNILRLLLATLLVCLCLLTAYS). A glycan (N-linked (GlcNAc...) asparagine) is linked at Asn-39. The interval 56 to 101 (NKKSKKISRKEAEKKRSSKKKASMKNVAQPRRPRPPPPAPCVATRD) is disordered. Disulfide bonds link Cys-96-Cys-111, Cys-103-Cys-117, Cys-110-Cys-128, Cys-114-Cys-135, and Cys-119-Cys-126. One can recognise an Agouti domain in the interval 96–135 (CVATRDSCKPPAPACCDPCASCQCRFFRSSCSCRVLNPTC).

It is found in the secreted. Functionally, involved in the regulation of melanogenesis. The binding of ASP to MC1R precludes alpha-MSH initiated signaling and thus blocks production of cAMP, leading to a down-regulation of eumelanogenesis (brown/black pigment) and thus increasing synthesis of pheomelanin (yellow/red pigment). The polypeptide is Agouti-signaling protein (ASIP) (Felis catus (Cat)).